The sequence spans 197 residues: uncharacterized protein (197 aa).

4 helical membrane passes run 12–41 (LCIF…WVLF), 78–100 (LIQG…TALS), 120–142 (VGVF…FGCV), and 162–184 (IRFA…IFRS).

It is found in the cell membrane. This is an uncharacterized protein from Treponema pallidum (strain Nichols).